The primary structure comprises 195 residues: Inner membrane-spanning protein YciB (195 aa).

A run of 5 helical transmembrane segments spans residues 34–54, 65–85, 88–108, 131–151, and 160–180; these read IYGA…ALWL, FTLG…EDTF, WKAP…HFIG, LNIA…YVVF, and FKVF…GIFL.

Belongs to the YciB family.

It localises to the cell inner membrane. In terms of biological role, plays a role in cell envelope biogenesis, maintenance of cell envelope integrity and membrane homeostasis. The protein is Inner membrane-spanning protein YciB of Pseudomonas paraeruginosa (strain DSM 24068 / PA7) (Pseudomonas aeruginosa (strain PA7)).